Reading from the N-terminus, the 288-residue chain is Syntaxin-1A (288 aa).

Residues 1-265 lie on the Cytoplasmic side of the membrane; sequence MKDRTQELRT…KYQSKARRKK (265 aa). 3 positions are modified to phosphoserine: S14, S64, and S95. Residues 68-109 are a coiled coil; sequence DEKTKEELEELMSDIKKTANKVRSKLKSIEQSIEQEEGLNRS. A Phosphoserine; by DAPK1 modification is found at S188. The 63-residue stretch at 192–254 folds into the t-SNARE coiled-coil homology domain; it reads LSEIETRHSE…ERAVSDTKKA (63 aa). Residues K252, K253, and K256 each participate in a glycyl lysine isopeptide (Lys-Gly) (interchain with G-Cter in SUMO) cross-link. The chain crosses the membrane as a helical; Anchor for type IV membrane protein span at residues 266–286; it reads IMIIICCVILGIVIASTVGGI. The Extracellular portion of the chain corresponds to 287–288; that stretch reads FA.

It belongs to the syntaxin family. Part of the SNARE core complex containing SNAP25, VAMP2 and STX1A; this complex constitutes the basic catalytic machinery of the complex neurotransmitter release apparatus. The SNARE complex interacts with CPLX1. Interacts with STXBP1. The interaction with STXBP1 promotes assembly of the SNARE complex. Interacts (via C-terminus) with KCNB1 (via C-terminus); the interaction increases in a calcium-dependent manner and induces a pore-independent enhancement of exocytosis in neuroendocrine cells, chromaffin cells, pancreatic beta cells and from the soma of dorsal root ganglia (DRG) neurons. Interacts with SYTL4. Interacts with STXBP6. Interacts with PLCL1 (via C2 domain). Interacts with OTOF. Interacts with LGI3. Interacts (via the H3 domain) with SLC6A4 (via the N-terminus); this interaction regulates SLC4A6 channel conductance in thalamocortical neurons. Interacts with SYT6 and SYT8; the interaction is Ca(2+)-dependent. Interacts with VAMP8. Interacts with SNAP23. Interacts with VAPA and SYBU. Interacts with PRRT2. Interacts with SEPT8. Interacts with STXBP5L. Interacts with synaptotagmin-1/SYT1. Interacts with SEPTIN5; in the cerebellar cortex. Interacts with SEPTIN4; in the striatum. In terms of processing, phosphorylated by CK2. Phosphorylation at Ser-188 by DAPK1 significantly decreases its interaction with STXBP1. Sumoylated, sumoylation is required for regulation of synaptic vesicle endocytosis. In terms of tissue distribution, highly expressed in embryonic spinal cord and ganglia and in adult cerebellum and cerebral cortex. As to expression, expressed in heart, liver, fat, skeletal muscle, kidney and brain.

The protein localises to the cytoplasmic vesicle. The protein resides in the secretory vesicle. Its subcellular location is the synaptic vesicle membrane. It is found in the synapse. It localises to the synaptosome. The protein localises to the cell membrane. The protein resides in the secreted. Plays an essential role in hormone and neurotransmitter calcium-dependent exocytosis and endocytosis. Part of the SNARE (Soluble NSF Attachment Receptor) complex composed of SNAP25, STX1A and VAMP2 which mediates the fusion of synaptic vesicles with the presynaptic plasma membrane. STX1A and SNAP25 are localized on the plasma membrane while VAMP2 resides in synaptic vesicles. The pairing of the three SNAREs from the N-terminal SNARE motifs to the C-terminal anchors leads to the formation of the SNARE complex, which brings membranes into close proximity and results in final fusion. Participates in the calcium-dependent regulation of acrosomal exocytosis in sperm. Also plays an important role in the exocytosis of hormones such as insulin or glucagon-like peptide 1 (GLP-1). The polypeptide is Syntaxin-1A (STX1A) (Homo sapiens (Human)).